We begin with the raw amino-acid sequence, 467 residues long: ATP synthase subunit beta (467 aa).

150–157 (GGAGVGKT) is an ATP binding site.

Belongs to the ATPase alpha/beta chains family. As to quaternary structure, F-type ATPases have 2 components, CF(1) - the catalytic core - and CF(0) - the membrane proton channel. CF(1) has five subunits: alpha(3), beta(3), gamma(1), delta(1), epsilon(1). CF(0) has three main subunits: a(1), b(2) and c(9-12). The alpha and beta chains form an alternating ring which encloses part of the gamma chain. CF(1) is attached to CF(0) by a central stalk formed by the gamma and epsilon chains, while a peripheral stalk is formed by the delta and b chains.

The protein resides in the cell inner membrane. The enzyme catalyses ATP + H2O + 4 H(+)(in) = ADP + phosphate + 5 H(+)(out). Its function is as follows. Produces ATP from ADP in the presence of a proton gradient across the membrane. The catalytic sites are hosted primarily by the beta subunits. The sequence is that of ATP synthase subunit beta from Aliivibrio fischeri (strain ATCC 700601 / ES114) (Vibrio fischeri).